The primary structure comprises 197 residues: ATP-dependent Clp protease proteolytic subunit 1 (197 aa).

S88 acts as the Nucleophile in catalysis. H113 is a catalytic residue.

Belongs to the peptidase S14 family. Fourteen ClpP subunits assemble into 2 heptameric rings which stack back to back to give a disk-like structure with a central cavity, resembling the structure of eukaryotic proteasomes.

The protein localises to the cytoplasm. It catalyses the reaction Hydrolysis of proteins to small peptides in the presence of ATP and magnesium. alpha-casein is the usual test substrate. In the absence of ATP, only oligopeptides shorter than five residues are hydrolyzed (such as succinyl-Leu-Tyr-|-NHMec, and Leu-Tyr-Leu-|-Tyr-Trp, in which cleavage of the -Tyr-|-Leu- and -Tyr-|-Trp bonds also occurs).. Functionally, cleaves peptides in various proteins in a process that requires ATP hydrolysis. Has a chymotrypsin-like activity. Plays a major role in the degradation of misfolded proteins. The sequence is that of ATP-dependent Clp protease proteolytic subunit 1 from Leifsonia xyli subsp. xyli (strain CTCB07).